The chain runs to 314 residues: tRNA pseudouridine synthase B (314 aa).

Position 43 (H43) interacts with substrate. The active-site Nucleophile is D48. Y76, Y179, and L200 together coordinate substrate.

This sequence belongs to the pseudouridine synthase TruB family. Type 1 subfamily.

It carries out the reaction uridine(55) in tRNA = pseudouridine(55) in tRNA. Functionally, responsible for synthesis of pseudouridine from uracil-55 in the psi GC loop of transfer RNAs. The chain is tRNA pseudouridine synthase B from Escherichia coli O139:H28 (strain E24377A / ETEC).